We begin with the raw amino-acid sequence, 322 residues long: Atrochrysone carboxyl ACP thioesterase nsrC (322 aa).

H105, H107, D109, and H110 together coordinate Zn(2+). The active-site Proton donor/acceptor is the D109.

It belongs to the metallo-beta-lactamase superfamily. Requires Zn(2+) as cofactor.

It catalyses the reaction atrochrysone carboxyl-[ACP] + H2O = atrochrysone carboxylate + holo-[ACP] + H(+). It functions in the pathway secondary metabolite biosynthesis. Atrochrysone carboxyl ACP thioesterase; part of the gene cluster that mediates the biosynthesis of the tetrahydroxanthone dimer neosartorin, which exhibits antibacterial activity. The two different monomeric units appear to be synthesized by the same set of enzymes, among which the Baeyer-Villiger monooxygenase nsrF is the key enzyme for the divergence of the biosynthetic routes. The pathway begins with the synthesis of atrochrysone thioester by the polyketide synthase nsrB. The atrochrysone carboxyl ACP thioesterase nsrC then breaks the thioester bond and releases the atrochrysone carboxylic acid from AacuL. Atrochrysone carboxylic acid is decarboxylated by the decarboxylase nsrE, and oxidized by the anthrone oxygenase nsrD to yield emodin. Emodin is then reduced to emodin hydroquinone by the oxidoreductase nsrR. A-ring reduction by the short chain dehydrogenase nsrJ, dehydration by the scytalone dehydratase-like protein nsrI and probable spontaneous re-oxidation, results in overall deoxygenation to chrysophanol. The Baeyer-Villiger monooxygenase nsrF accepts chrysophanol as a substrate to insert one oxygen atom at two different positions to yield the precursors of both monomric units. NsrF is promiscuous/flexible in interacting with the 2 (non methylated and methylated) aromatic rings of chrysophanol, thus diverging the biosynthetic pathway at this point. After the hydrolysis of the lactones, methylesterification by the methyltransferase nsrG yields respectively moniliphenone and 2,2',6'-trihydroxy-4-methyl-6-methoxya-cyldiphenylmethanone. The next steps are the hydroxylation by the FAD-dependent monooxygenase nsrK, followed by isomerization by the monooxygenase nsrQ. The short chain dehydrogenase/reductase nsrO then catalyzes the C-5 ketoreduction to give the xanthone skeleton of blennolide C and 5-acetylblennolide A. The acetyltransferase nsrL has a strict substrate specificity and uses only blennolide A but not blennolide C to yield 5-acetylblennolide A as the single-acetylated product. In the final step of the biosynthesis, the heterodimerization of the 2 xanthones, blennolide C and 5-acetylblennolide A, is catalyzed by the cytochrome P450 monooxygenase nsrP. NsrP can utilize at least three different xanthones as its substrates to perform the dimerization reaction. This chain is Atrochrysone carboxyl ACP thioesterase nsrC, found in Aspergillus novofumigatus (strain IBT 16806).